Here is a 118-residue protein sequence, read N- to C-terminus: Large ribosomal subunit protein bL20 (118 aa).

Belongs to the bacterial ribosomal protein bL20 family.

In terms of biological role, binds directly to 23S ribosomal RNA and is necessary for the in vitro assembly process of the 50S ribosomal subunit. It is not involved in the protein synthesizing functions of that subunit. The chain is Large ribosomal subunit protein bL20 from Pelagibacter ubique (strain HTCC1062).